The chain runs to 275 residues: Large ribosomal subunit protein uL2 (275 aa).

Disordered stretches follow at residues 1-20 (MAVK…TTAD) and 214-275 (WLGR…TRRK). Residues 255 to 275 (KGLKTRRKRKTSDRFIVTRRK) show a composition bias toward basic residues.

This sequence belongs to the universal ribosomal protein uL2 family. Part of the 50S ribosomal subunit. Forms a bridge to the 30S subunit in the 70S ribosome.

Its function is as follows. One of the primary rRNA binding proteins. Required for association of the 30S and 50S subunits to form the 70S ribosome, for tRNA binding and peptide bond formation. It has been suggested to have peptidyltransferase activity; this is somewhat controversial. Makes several contacts with the 16S rRNA in the 70S ribosome. The sequence is that of Large ribosomal subunit protein uL2 (rplB) from Deinococcus radiodurans (strain ATCC 13939 / DSM 20539 / JCM 16871 / CCUG 27074 / LMG 4051 / NBRC 15346 / NCIMB 9279 / VKM B-1422 / R1).